The primary structure comprises 232 residues: Probable ADP-ribosylation factor GTPase-activating protein AGD15 (232 aa).

An Arf-GAP domain is found at 16 to 130 (SKILEALLKH…RWVSPGAIQP (115 aa)). The C4-type zinc-finger motif lies at 31 to 54 (CADCRSKAPRWASVNLGIFICMQC). Residues 203–232 (PNQKNENFSSEVNQNRRTTIAPPSSWATFD) are disordered. The span at 206–232 (KNENFSSEVNQNRRTTIAPPSSWATFD) shows a compositional bias: polar residues.

Its function is as follows. GTPase-activating protein (GAP) for ADP ribosylation factor (ARF). The polypeptide is Probable ADP-ribosylation factor GTPase-activating protein AGD15 (AGD15) (Arabidopsis thaliana (Mouse-ear cress)).